We begin with the raw amino-acid sequence, 188 residues long: Peptidyl-tRNA hydrolase (188 aa).

F15 provides a ligand contact to tRNA. Catalysis depends on H20, which acts as the Proton acceptor. 3 residues coordinate tRNA: Y64, N66, and N112.

This sequence belongs to the PTH family. As to quaternary structure, monomer.

It localises to the cytoplasm. The catalysed reaction is an N-acyl-L-alpha-aminoacyl-tRNA + H2O = an N-acyl-L-amino acid + a tRNA + H(+). In terms of biological role, hydrolyzes ribosome-free peptidyl-tRNAs (with 1 or more amino acids incorporated), which drop off the ribosome during protein synthesis, or as a result of ribosome stalling. Functionally, catalyzes the release of premature peptidyl moieties from peptidyl-tRNA molecules trapped in stalled 50S ribosomal subunits, and thus maintains levels of free tRNAs and 50S ribosomes. The sequence is that of Peptidyl-tRNA hydrolase from Borrelia duttonii (strain Ly).